The following is a 1563-amino-acid chain: Pentafunctional AROM polypeptide (1563 aa).

The tract at residues 1–382 is 3-dehydroquinate synthase; the sequence is MAESSSNPTR…YEPKASVVED (382 aa). NAD(+) contacts are provided by residues 48-50, 82-85, 113-115, and Asp118; these read DTN, EYSK, and GGV. Arg129 lines the 7-phospho-2-dehydro-3-deoxy-D-arabino-heptonate pocket. 138–139 is a binding site for NAD(+); that stretch reads TT. 2 residues coordinate 7-phospho-2-dehydro-3-deoxy-D-arabino-heptonate: Asp145 and Lys151. Lys160 provides a ligand contact to NAD(+). Residue Asn161 participates in 7-phospho-2-dehydro-3-deoxy-D-arabino-heptonate binding. NAD(+) contacts are provided by residues 178-181 and Asn189; that span reads FLNT. Glu193 lines the Zn(2+) pocket. 7-phospho-2-dehydro-3-deoxy-D-arabino-heptonate-binding positions include 193-196 and Lys248; that span reads EVIK. The active-site Proton acceptor; for 3-dehydroquinate synthase activity is Glu258. 7-phospho-2-dehydro-3-deoxy-D-arabino-heptonate is bound by residues 262–266 and His269; that span reads RNLLN. His269 serves as a coordination point for Zn(2+). The active-site Proton acceptor; for 3-dehydroquinate synthase activity is His273. Residues His285 and Lys354 each contribute to the 7-phospho-2-dehydro-3-deoxy-D-arabino-heptonate site. Zn(2+) is bound at residue His285. Positions 395–834 are EPSP synthase; it reads VHAGVPKDLK…WDTMSNYFKS (440 aa). Cys816 functions as the For EPSP synthase activity in the catalytic mechanism. Over residues 836–850 the composition is skewed to basic and acidic residues; sequence LEGEEEPHSSHVSHE. The segment at 836-857 is disordered; sequence LEGEEEPHSSHVSHEKPRKGNP. The interval 857 to 1051 is shikimate kinase; the sequence is PKSIFIIGMR…KKKPQSSFVS (195 aa). 864-871 lines the ATP pocket; that stretch reads GMRGAGKS. The interval 1052–1265 is 3-dehydroquinase; that stretch reads LTVPNVSKAL…AAPGQLSAAE (214 aa). The Proton acceptor; for 3-dehydroquinate dehydratase activity role is filled by His1168. Lys1196 (schiff-base intermediate with substrate; for 3-dehydroquinate dehydratase activity) is an active-site residue. The interval 1278–1563 is shikimate dehydrogenase; the sequence is PRSFYLFGKP…TDAQAAVMGN (286 aa).

The protein in the N-terminal section; belongs to the sugar phosphate cyclases superfamily. Dehydroquinate synthase family. In the 2nd section; belongs to the EPSP synthase family. This sequence in the 3rd section; belongs to the shikimate kinase family. It in the 4th section; belongs to the type-I 3-dehydroquinase family. The protein in the C-terminal section; belongs to the shikimate dehydrogenase family. As to quaternary structure, homodimer. The cofactor is Zn(2+).

It is found in the cytoplasm. It catalyses the reaction 7-phospho-2-dehydro-3-deoxy-D-arabino-heptonate = 3-dehydroquinate + phosphate. It carries out the reaction 3-dehydroquinate = 3-dehydroshikimate + H2O. The enzyme catalyses shikimate + NADP(+) = 3-dehydroshikimate + NADPH + H(+). The catalysed reaction is shikimate + ATP = 3-phosphoshikimate + ADP + H(+). It catalyses the reaction 3-phosphoshikimate + phosphoenolpyruvate = 5-O-(1-carboxyvinyl)-3-phosphoshikimate + phosphate. It participates in metabolic intermediate biosynthesis; chorismate biosynthesis; chorismate from D-erythrose 4-phosphate and phosphoenolpyruvate: step 2/7. It functions in the pathway metabolic intermediate biosynthesis; chorismate biosynthesis; chorismate from D-erythrose 4-phosphate and phosphoenolpyruvate: step 3/7. The protein operates within metabolic intermediate biosynthesis; chorismate biosynthesis; chorismate from D-erythrose 4-phosphate and phosphoenolpyruvate: step 4/7. Its pathway is metabolic intermediate biosynthesis; chorismate biosynthesis; chorismate from D-erythrose 4-phosphate and phosphoenolpyruvate: step 5/7. It participates in metabolic intermediate biosynthesis; chorismate biosynthesis; chorismate from D-erythrose 4-phosphate and phosphoenolpyruvate: step 6/7. Its function is as follows. The AROM polypeptide catalyzes 5 consecutive enzymatic reactions in prechorismate polyaromatic amino acid biosynthesis. This chain is Pentafunctional AROM polypeptide, found in Sordaria macrospora (strain ATCC MYA-333 / DSM 997 / K(L3346) / K-hell).